A 443-amino-acid polypeptide reads, in one-letter code: Spermidine hydroxycinnamoyltransferase 1 (443 aa).

Catalysis depends on proton acceptor residues His167 and Asp390.

It belongs to the plant acyltransferase family.

Functionally, hydroxycinnamoyl transferase that catalyzes the transfer of an acyl from p-coumaryol-CoA to spermidine, to produce coumaroyl spermidine. Can use feruloyl-CoA as acyl donor. Contributes to the natural variation of spermidine-based phenolamides in rice cultivars. This is Spermidine hydroxycinnamoyltransferase 1 from Oryza sativa subsp. japonica (Rice).